Here is a 341-residue protein sequence, read N- to C-terminus: Probable membrane-associated kinase regulator 1 (341 aa).

5 disordered regions span residues 1-29 (MRRQPPRPRNSPPQSHSSPSSSSSEFEFN), 67-122 (TLGS…SSRP), 158-185 (PKTNLHHHSSSSSTATTAAAPSSVKRMS), 206-230 (LSPKQSSNIKTESSSSLKDSGNNIR), and 288-310 (RGGFPVHQGSCSSSSSNNNSVSS). Composition is skewed to low complexity over residues 12–29 (PPQSHSSPSSSSSEFEFN), 67–108 (TLGS…SFPL), and 167–180 (SSSSTATTAAAPSS). The segment covering 208–230 (PKQSSNIKTESSSSLKDSGNNIR) has biased composition (polar residues). Residues 297–310 (SCSSSSSNNNSVSS) show a composition bias toward low complexity.

As to quaternary structure, a C-terminus-derived peptide binds BRI1 in vitro.

The protein localises to the cell membrane. Functionally, may negatively regulate brassinosteroid signaling. In Arabidopsis thaliana (Mouse-ear cress), this protein is Probable membrane-associated kinase regulator 1 (MAKR1).